Reading from the N-terminus, the 444-residue chain is Acyl-CoA (8-3)-desaturase (444 aa).

Met1 bears the N-acetylmethionine mark. The Cytoplasmic portion of the chain corresponds to Met1–Arg121. In terms of domain architecture, Cytochrome b5 heme-binding spans Pro17–Ser94. A helical transmembrane segment spans residues Met122–Leu142. Over Asp143–Ala145 the chain is Lumenal. A helical transmembrane segment spans residues Ala146 to Val170. The Cytoplasmic portion of the chain corresponds to Gln171–Phe267. The Histidine box-1 motif lies at His179 to His183. The Histidine box-2 motif lies at His216–His220. A helical membrane pass occupies residues Leu268–Ile288. The Lumenal segment spans residues Gln289 to Arg305. Residues Phe306–Val326 traverse the membrane as a helical segment. Over Arg327 to Gln444 the chain is Cytoplasmic. The short motif at Gln382 to His386 is the Histidine box-3 element.

This sequence belongs to the fatty acid desaturase type 1 family. As to expression, widely expressed, with highest levels in liver, brain, adrenal gland and heart. Highly expressed in fetal liver and brain.

It is found in the endoplasmic reticulum membrane. It localises to the mitochondrion. It catalyses the reaction (8Z,11Z,14Z)-eicosatrienoyl-CoA + 2 Fe(II)-[cytochrome b5] + O2 + 2 H(+) = (5Z,8Z,11Z,14Z)-eicosatetraenoyl-CoA + 2 Fe(III)-[cytochrome b5] + 2 H2O. The catalysed reaction is (8Z,11Z,14Z,17Z)-eicosatetraenoyl-CoA + 2 Fe(II)-[cytochrome b5] + O2 + 2 H(+) = (5Z,8Z,11Z,14Z,17Z)-eicosapentaenoyl-CoA + 2 Fe(III)-[cytochrome b5] + 2 H2O. The enzyme catalyses (11E)-octadecenoyl-CoA + 2 Fe(II)-[cytochrome b5] + O2 + 2 H(+) = (5Z,11E)-octadecadienoyl-CoA + 2 Fe(III)-[cytochrome b5] + 2 H2O. The protein operates within lipid metabolism; polyunsaturated fatty acid biosynthesis. In terms of biological role, acts as a front-end fatty acyl-coenzyme A (CoA) desaturase that introduces a cis double bond at carbon 5 located between a preexisting double bond and the carboxyl end of the fatty acyl chain. Involved in biosynthesis of highly unsaturated fatty acids (HUFA) from the essential polyunsaturated fatty acids (PUFA) linoleic acid (LA) (18:2n-6) and alpha-linolenic acid (ALA) (18:3n-3) precursors. Specifically, desaturates dihomo-gamma-linoleoate (DGLA) (20:3n-6) and eicosatetraenoate (ETA) (20:4n-3) to generate arachidonate (AA) (20:4n-6) and eicosapentaenoate (EPA) (20:5n-3), respectively. As a rate limiting enzyme for DGLA (20:3n-6) and AA (20:4n-6)-derived eicosanoid biosynthesis, controls the metabolism of inflammatory lipids like prostaglandin E2, critical for efficient acute inflammatory response and maintenance of epithelium homeostasis. Contributes to membrane phospholipid biosynthesis by providing AA (20:4n-6) as a major acyl chain esterified into phospholipids. In particular, regulates phosphatidylinositol-4,5-bisphosphate levels, modulating inflammatory cytokine production in T-cells. Also desaturates (11E)-octadecenoate (trans-vaccenoate)(18:1n-9), a metabolite in the biohydrogenation pathway of LA (18:2n-6). Functionally, does not exhibit any catalytic activity toward 20:3n-6, but it may enhance FADS2 activity. The polypeptide is Acyl-CoA (8-3)-desaturase (Homo sapiens (Human)).